Reading from the N-terminus, the 662-residue chain is DNA topoisomerase 4 subunit B (662 aa).

ATP contacts are provided by residues Tyr20, Asn60, Asp87, 129 to 135 (GLHGVGI), and Lys359. Residues 439–553 (TELFIVEGDS…EGHLYLAKPP (115 aa)) form the Toprim domain. 3 residues coordinate Mg(2+): Glu445, Asp518, and Asp520.

This sequence belongs to the type II topoisomerase family. ParE type 1 subfamily. In terms of assembly, heterotetramer composed of ParC and ParE. Mg(2+) is required as a cofactor. Requires Mn(2+) as cofactor. It depends on Ca(2+) as a cofactor.

It catalyses the reaction ATP-dependent breakage, passage and rejoining of double-stranded DNA.. Functionally, topoisomerase IV is essential for chromosome segregation. It relaxes supercoiled DNA. Performs the decatenation events required during the replication of a circular DNA molecule. The chain is DNA topoisomerase 4 subunit B from Rickettsia conorii (strain ATCC VR-613 / Malish 7).